The sequence spans 81 residues: Photosystem I iron-sulfur center (81 aa).

2 consecutive 4Fe-4S ferredoxin-type domains span residues 2 to 31 (SHAV…MVPW) and 37 to 68 (GQIA…IRVY). 8 residues coordinate [4Fe-4S] cluster: cysteine 11, cysteine 14, cysteine 17, cysteine 21, cysteine 48, cysteine 51, cysteine 54, and cysteine 58.

In terms of assembly, the cyanobacterial PSI reaction center is composed of one copy each of PsaA,B,C,D,E,F,I,J,K,L,M and X, and forms trimeric complexes. It depends on [4Fe-4S] cluster as a cofactor.

Its subcellular location is the cellular thylakoid membrane. The enzyme catalyses reduced [plastocyanin] + hnu + oxidized [2Fe-2S]-[ferredoxin] = oxidized [plastocyanin] + reduced [2Fe-2S]-[ferredoxin]. Its function is as follows. Apoprotein for the two 4Fe-4S centers FA and FB of photosystem I (PSI); essential for photochemical activity. FB is the terminal electron acceptor of PSI, donating electrons to ferredoxin. The C-terminus interacts with PsaA/B/D and helps assemble the protein into the PSI complex. Required for binding of PsaD and PsaE to PSI. PSI is a plastocyanin/cytochrome c6-ferredoxin oxidoreductase, converting photonic excitation into a charge separation, which transfers an electron from the donor P700 chlorophyll pair to the spectroscopically characterized acceptors A0, A1, FX, FA and FB in turn. The sequence is that of Photosystem I iron-sulfur center from Synechococcus sp. (strain WH7803).